The sequence spans 540 residues: Hydroxylamine reductase (540 aa).

[4Fe-4S] cluster-binding residues include C3, C6, C15, and C21. Residues H236, E260, C304, C395, C423, C448, E483, and K485 each contribute to the hybrid [4Fe-2O-2S] cluster site. C395 is modified (cysteine persulfide).

This sequence belongs to the HCP family. [4Fe-4S] cluster serves as cofactor. Requires hybrid [4Fe-2O-2S] cluster as cofactor.

The protein resides in the cytoplasm. The enzyme catalyses A + NH4(+) + H2O = hydroxylamine + AH2 + H(+). In terms of biological role, catalyzes the reduction of hydroxylamine to form NH(3) and H(2)O. In Methanosarcina mazei (strain ATCC BAA-159 / DSM 3647 / Goe1 / Go1 / JCM 11833 / OCM 88) (Methanosarcina frisia), this protein is Hydroxylamine reductase.